The following is a 259-amino-acid chain: O-antigen export system permease protein RfbA (259 aa).

The next 6 membrane-spanning stretches (helical) occupy residues 33 to 53 (LGYL…YFIF), 73 to 95 (FPWQ…NAQI), 111 to 131 (VMME…FLFV), 142 to 162 (WGIP…SIIF), 176 to 196 (VSLG…SDMI), and 228 to 248 (EYIS…LSIF). In terms of domain architecture, ABC transmembrane type-2 spans 33-251 (LGYLWSVANP…VVGLSIFNKL (219 aa)).

The protein belongs to the ABC-2 integral membrane protein family.

It is found in the cell inner membrane. Functionally, may form an ATP-driven O-antigen export apparatus, in association with RfbB. This is O-antigen export system permease protein RfbA (rfbA) from Klebsiella pneumoniae.